The sequence spans 74 residues: Small ribosomal subunit protein bS18 (74 aa).

It belongs to the bacterial ribosomal protein bS18 family. In terms of assembly, part of the 30S ribosomal subunit. Forms a tight heterodimer with protein bS6.

Binds as a heterodimer with protein bS6 to the central domain of the 16S rRNA, where it helps stabilize the platform of the 30S subunit. The sequence is that of Small ribosomal subunit protein bS18 from Alkalilimnicola ehrlichii (strain ATCC BAA-1101 / DSM 17681 / MLHE-1).